We begin with the raw amino-acid sequence, 144 residues long: Granulocyte-macrophage colony-stimulating factor (144 aa).

The first 17 residues, 1-17, serve as a signal peptide directing secretion; sequence MWLQNLLFLNTVVCSIS. Serine 22 and serine 24 each carry an O-linked (GalNAc...) serine glycan. A glycan (O-linked (GalNAc...) threonine) is linked at threonine 27. Residues asparagine 44, asparagine 45, and asparagine 54 are each glycosylated (N-linked (GlcNAc...) asparagine). Intrachain disulfides connect cysteine 71-cysteine 113 and cysteine 105-cysteine 138.

This sequence belongs to the GM-CSF family. As to quaternary structure, monomer. The signaling GM-CSF receptor complex is a dodecamer of two head-to-head hexamers of two alpha, two beta, and two ligand subunits.

It is found in the secreted. Its function is as follows. Cytokine that stimulates the growth and differentiation of hematopoietic precursor cells from various lineages, including granulocytes, macrophages, eosinophils and erythrocytes. The polypeptide is Granulocyte-macrophage colony-stimulating factor (CSF2) (Felis catus (Cat)).